We begin with the raw amino-acid sequence, 2133 residues long: MQLELSTCVFLCLLPLGFSAIRRYYLGAVELSWDYRQSELLRELHVDTRFPATAPGALPLGPSVLYKKTVFVEFTDQLFSVARPRPPWMGLLGPTIQAEVYDTVVVTLKNMASHPVSLHAVGVSFWKSSEGAEYEDHTSQREKEDDKVLPGKSQTYVWQVLKENGPTASDPPCLTYSYLSHVDLVKDLNSGLIGALLVCREGSLTRERTQNLHEFVLLFAVFDEGKSWHSARNDSWTRAMDPAPARAQPAMHTVNGYVNRSLPGLIGCHKKSVYWHVIGMGTSPEVHSIFLEGHTFLVRHHRQASLEISPLTFLTAQTFLMDLGQFLLFCHISSHHHGGMEAHVRVESCAEEPQLRRKADEEEDYDDNLYDSDMDVVRLDGDDVSPFIQIRSVAKKHPKTWVHYISAEEEDWDYAPAVPSPSDRSYKSLYLNSGPQRIGRKYKKARFVAYTDVTFKTRKAIPYESGILGPLLYGEVGDTLLIIFKNKASRPYNIYPHGITDVSALHPGRLLKGWKHLKDMPILPGETFKYKWTVTVEDGPTKSDPRCLTRYYSSSINLEKDLASGLIGPLLICYKESVDQRGNQMMSDKRNVILFSVFDENQSWYLAENIQRFLPNPDGLQPQDPEFQASNIMHSINGYVFDSLQLSVCLHEVAYWYILSVGAQTDFLSVFFSGYTFKHKMVYEDTLTLFPFSGETVFMSMENPGLWVLGCHNSDLRNRGMTALLKVYSCDRDIGDYYDNTYEDIPGFLLSGKNVIEPRSFAQNSRPPSASQKQFQTITSPEDDVELDPQSGERTQALEELSVPSGDGSMLLGQNPAPHGSSSSDLQEARNEADDYLPGARERNTAPSAAARLRPELHHSAERVLTPEPEKELKKLDSKMSSSSDLLKTSPTIPSDTLSAETERTHSLGPPHPQVNFRSQLGAIVLGKNSSHFIGAGVPLGSTEEDHESSLGENVSPVESDGIFEKERAHGPASLTKDDVLFKVNISLVKTNKARVYLKTNRKIHIDDAALLTENRASATFMDKNTTASGLNHVSNWIKGPLGKNPLSSERGPSPELLTSSGSGKSVKGQSSGQGRIRVAVEEEELSKGKEMMLPNSELTFLTNSADVQGNDTHSQGKKSREEMERREKLVQEKVDLPQVYTATGTKNFLRNIFHQSTEPSVEGFDGGSHAPVPQDSRSLNDSAERAETHIAHFSAIREEAPLEAPGNRTGPGPRSAVPRRVKQSLKQIRLPLEEIKPERGVVLNATSTRWSESSPILQGAKRNNLSLPFLTLEMAGGQGKISALGKSAAGPLASGKLEKAVLSSAGLSEASGKAEFLPKVRVHREDLLPQKTSNVSCAHGDLGQEIFLQKTRGPVNLNKVNRPGRTPSKLLGPPMPKEWESLEKSPKSTALRTKDIISLPLDRHESNHSIAAKNEGQAETQREAAWTKQGGPGRLCAPKPPVLRRHQRDISLPTFQPEEDKMDYDDIFSTETKGEDFDIYGEDENQDPRSFQKRTRHYFIAAVEQLWDYGMSESPRALRNRAQNGEVPRFKKVVFREFADGSFTQPSYRGELNKHLGLLGPYIRAEVEDNIMVTFKNQASRPYSFYSSLISYPDDQEQGAEPRHNFVQPNETRTYFWKVQHHMAPTEDEFDCKAWAYFSDVDLEKDVHSGLIGPLLICRANTLNAAHGRQVTVQEFALFFTIFDETKSWYFTENVERNCRAPCHLQMEDPTLKENYRFHAINGYVMDTLPGLVMAQNQRIRWYLLSMGSNENIHSIHFSGHVFSVRKKEEYKMAVYNLYPGVFETVEMLPSKVGIWRIECLIGEHLQAGMSTTFLVYSKECQAPLGMASGRIRDFQITASGQYGQWAPKLARLHYSGSINAWSTKDPHSWIKVDLLAPMIIHGIMTQGARQKFSSLYISQFIIMYSLDGRNWQSYRGNSTGTLMVFFGNVDASGIKHNIFNPPIVARYIRLHPTHYSIRSTLRMELMGCDLNSCSMPLGMQNKAISDSQITASSHLSNIFATWSPSQARLHLQGRTNAWRPRVSSAEEWLQVDLQKTVKVTGITTQGVKSLLSSMYVKEFLVSSSQDGRRWTLFLQDGHTKVFQGNQDSSTPVVNALDPPLFTRYLRIHPTSWAQHIALRLEVLGCEAQDLY.

A signal peptide spans methionine 1 to serine 19. 4 consecutive Plastocyanin-like domains span residues alanine 20–cysteine 199, glutamate 207–arginine 357, lysine 399–cysteine 573, and asparagine 583–cysteine 730. 2 consecutive F5/8 type A domains span residues alanine 20 to arginine 357 and lysine 399 to cysteine 730. Cysteine 173 and cysteine 199 are oxidised to a cystine. N-linked (GlcNAc...) asparagine glycans are attached at residues asparagine 233 and asparagine 259. Cysteines 547 and 573 form a disulfide. N-linked (GlcNAc...) asparagine glycosylation occurs at asparagine 601. A sulfotyrosine mark is found at tyrosine 737, tyrosine 738, and tyrosine 742. Disordered stretches follow at residues serine 760 to glutamine 790 and proline 804 to glutamine 914. The tract at residues serine 760 to glutamine 1599 is b. Residues phenylalanine 761–serine 780 are compositionally biased toward polar residues. 2 stretches are compositionally biased toward basic and acidic residues: residues leucine 853–glutamate 862 and glutamate 868–serine 878. Positions lysine 879–lysine 888 are enriched in low complexity. Residues threonine 889–alanine 900 are compositionally biased toward polar residues. Residues asparagine 929, asparagine 985, and asparagine 1025 are each glycosylated (N-linked (GlcNAc...) asparagine). A disordered region spans residues leucine 1042–arginine 1078. A compositionally biased stretch (low complexity) spans serine 1060 to glycine 1075. The N-linked (GlcNAc...) asparagine glycan is linked to asparagine 1111. Residues proline 1160–serine 1179 form a disordered region. N-linked (GlcNAc...) asparagine glycans are attached at residues asparagine 1181, asparagine 1208, asparagine 1245, asparagine 1265, and asparagine 1335. Residues glutamate 1200–arginine 1221 are disordered. Disordered stretches follow at residues leucine 1358 to alanine 1391 and glutamate 1406 to proline 1441. Over residues lysine 1378–proline 1387 the composition is skewed to basic and acidic residues. 2 N-linked (GlcNAc...) asparagine glycosylation sites follow: asparagine 1408 and asparagine 1611. 2 consecutive Plastocyanin-like domains span residues arginine 1495–cysteine 1659 and glycine 1669–cysteine 1822. An F5/8 type A 3 domain is found at arginine 1495 to cysteine 1822. 3 disulfide bridges follow: cysteine 1633–cysteine 1659, cysteine 1822–cysteine 1970, and cysteine 1975–cysteine 2127. 2 F5/8 type C domains span residues cysteine 1822–cysteine 1970 and cysteine 1975–cysteine 2127. An N-linked (GlcNAc...) asparagine glycan is attached at asparagine 1919.

The protein belongs to the multicopper oxidase family. As to quaternary structure, interacts with vWF. vWF binding is essential for the stabilization of F8 in circulation. Post-translationally, proteolytically cleaved by cathepsin CTSG to produce a partially activated form.

The protein localises to the secreted. It localises to the extracellular space. Functionally, factor VIII, along with calcium and phospholipid, acts as a cofactor for factor IXa when it converts factor X to the activated form, factor Xa. The protein is Coagulation factor VIII (F8) of Sus scrofa (Pig).